Here is a 430-residue protein sequence, read N- to C-terminus: MSSIVAIKGFNDVLPTQTAAWRRLEQHLASLMDAYGYQQIRLPIVEQTGLFKRAIGDATDIVEKEMYTFFDKGTPPESLTLRPEGTAGCVRAMLEHNLLRGATPRVWYVGPMFRYEKPQKGRYRQFHQFGVETFGVATPDIDAELILMTARLWKRMGVSEKVQLELNTLGEIDERAAYRTALVEFLTQHKEALDEDSQRRLGTNPLRILDSKVESTQKILENAPKLHDFLQEDSLAHFNQLQEYLTHAGVSFVINQKLVRGLDYYNKTVFEWTTTALGSQGTVCAGGRYDGLVGQLKGKADQSVPAVGFAMGMERLLLLLEQVEQAEVVRDCDVFLVAESAFQGHALVLAEQIRDQFEGLASTIRVKTGSQGSMKSQMKKADQSGAHYAVILGEREWTTQELTVKELATSEQSQVAISELVPFLVKKFEK.

The protein belongs to the class-II aminoacyl-tRNA synthetase family. As to quaternary structure, homodimer.

It is found in the cytoplasm. The catalysed reaction is tRNA(His) + L-histidine + ATP = L-histidyl-tRNA(His) + AMP + diphosphate + H(+). This is Histidine--tRNA ligase from Acinetobacter baylyi (strain ATCC 33305 / BD413 / ADP1).